We begin with the raw amino-acid sequence, 160 residues long: Transcriptional repressor NrdR (160 aa).

A zinc finger lies at 3–34; the sequence is CPFCRHADTQVVDSRVSEDGATIRRRRRCPAC. In terms of domain architecture, ATP-cone spans 49 to 139; the sequence is PSVVKKDGSR…VYRRFEDVSE (91 aa).

Belongs to the NrdR family. Zn(2+) is required as a cofactor.

Functionally, negatively regulates transcription of bacterial ribonucleotide reductase nrd genes and operons by binding to NrdR-boxes. The sequence is that of Transcriptional repressor NrdR from Paraburkholderia phytofirmans (strain DSM 17436 / LMG 22146 / PsJN) (Burkholderia phytofirmans).